Here is a 63-residue protein sequence, read N- to C-terminus: Cecropin-A1 (63 aa).

The N-terminal stretch at 1–23 (MKFYNIFVFVALILAITIGQSEA) is a signal peptide. R62 carries the arginine amide modification.

It belongs to the cecropin family.

The protein localises to the secreted. In terms of biological role, cecropins have lytic and antibacterial activity against several Gram-positive and Gram-negative bacteria. This is Cecropin-A1 (CecA1) from Drosophila mauritiana (Fruit fly).